The sequence spans 228 residues: Ankyrin repeat domain-containing protein 46 (228 aa).

4 ANK repeats span residues glutamine 11–isoleucine 40, arginine 44–threonine 74, glutamine 77–isoleucine 103, and glutamine 107–glycine 138. A helical transmembrane segment spans residues valine 195 to glycine 215.

Its subcellular location is the membrane. This chain is Ankyrin repeat domain-containing protein 46 (Ankrd46), found in Rattus norvegicus (Rat).